Consider the following 440-residue polypeptide: DNA polymerase delta small subunit (440 aa).

Belongs to the DNA polymerase delta/II small subunit family. As to quaternary structure, heterodimer with subunits of 125 kDa and 50 kDa.

It is found in the nucleus. The enzyme catalyses DNA(n) + a 2'-deoxyribonucleoside 5'-triphosphate = DNA(n+1) + diphosphate. Functionally, the function of the small subunit is not yet clear. The protein is DNA polymerase delta small subunit (POLD2) of Arabidopsis thaliana (Mouse-ear cress).